The following is a 385-amino-acid chain: Cytochrome b (385 aa).

4 consecutive transmembrane segments (helical) span residues 32–52 (FGSL…TLAM), 76–98 (WLVR…LHIG), 113–133 (TWAI…LGYV), and 179–199 (FFAL…MHLI). Residues His-82 and His-96 each coordinate heme b. Heme b is bound by residues His-183 and His-197. His-202 contacts a ubiquinone. Helical transmembrane passes span 226-246 (FVFK…IFVF), 290-310 (LLGV…PITD), 322-342 (LSKV…QIGA), and 349-369 (FIEF…VIVP).

Belongs to the cytochrome b family. In terms of assembly, fungal cytochrome b-c1 complex contains 10 subunits; 3 respiratory subunits, 2 core proteins and 5 low-molecular weight proteins. Cytochrome b-c1 complex is a homodimer. Heme b is required as a cofactor.

The protein localises to the mitochondrion inner membrane. Its function is as follows. Component of the ubiquinol-cytochrome c reductase complex (complex III or cytochrome b-c1 complex) that is part of the mitochondrial respiratory chain. The b-c1 complex mediates electron transfer from ubiquinol to cytochrome c. Contributes to the generation of a proton gradient across the mitochondrial membrane that is then used for ATP synthesis. The sequence is that of Cytochrome b (cob) from Aspergillus terreus (strain NIH 2624 / FGSC A1156).